We begin with the raw amino-acid sequence, 277 residues long: Undecaprenyl-diphosphatase (277 aa).

Transmembrane regions (helical) follow at residues 3-23 (IVLL…EFLP), 43-63 (VGKV…ILVY), 85-105 (LNVL…GKAI), 109-129 (LFTP…ILWA), 189-209 (TDFS…YSLF), 218-238 (ADLP…WLCI), and 249-269 (SFVG…ATAW).

Belongs to the UppP family.

The protein localises to the cell inner membrane. The enzyme catalyses di-trans,octa-cis-undecaprenyl diphosphate + H2O = di-trans,octa-cis-undecaprenyl phosphate + phosphate + H(+). Catalyzes the dephosphorylation of undecaprenyl diphosphate (UPP). Confers resistance to bacitracin. The chain is Undecaprenyl-diphosphatase from Albidiferax ferrireducens (strain ATCC BAA-621 / DSM 15236 / T118) (Rhodoferax ferrireducens).